The sequence spans 79 residues: UPF0654 protein C11D3.01c (79 aa).

The interval 1 to 79 is disordered; that stretch reads MPNPGNVIGG…RAQEELENLE (79 aa). The segment covering 22–45 has biased composition (basic and acidic residues); that stretch reads EETKQREKEYLEEHEGEVGEEHQK.

The protein belongs to the UPF0654 (con-6) family.

The polypeptide is UPF0654 protein C11D3.01c (Schizosaccharomyces pombe (strain 972 / ATCC 24843) (Fission yeast)).